The primary structure comprises 395 residues: S-adenosylmethionine synthase (395 aa).

H16 serves as a coordination point for ATP. D18 is a binding site for Mg(2+). E44 lines the K(+) pocket. Residues E57 and Q100 each coordinate L-methionine. The segment at 100-110 is flexible loop; sequence QSPDIAQGVDD. ATP is bound by residues 174–176, 241–242, D250, 256–257, A273, and K277; these read DAK, RF, and RK. D250 is an L-methionine binding site. K281 is an L-methionine binding site.

It belongs to the AdoMet synthase family. Homotetramer; dimer of dimers. Requires Mg(2+) as cofactor. The cofactor is K(+).

It is found in the cytoplasm. It carries out the reaction L-methionine + ATP + H2O = S-adenosyl-L-methionine + phosphate + diphosphate. It participates in amino-acid biosynthesis; S-adenosyl-L-methionine biosynthesis; S-adenosyl-L-methionine from L-methionine: step 1/1. Catalyzes the formation of S-adenosylmethionine (AdoMet) from methionine and ATP. The overall synthetic reaction is composed of two sequential steps, AdoMet formation and the subsequent tripolyphosphate hydrolysis which occurs prior to release of AdoMet from the enzyme. The sequence is that of S-adenosylmethionine synthase from Levilactobacillus brevis (strain ATCC 367 / BCRC 12310 / CIP 105137 / JCM 1170 / LMG 11437 / NCIMB 947 / NCTC 947) (Lactobacillus brevis).